The following is a 361-amino-acid chain: Chorismate synthase (361 aa).

NADP(+) contacts are provided by R48 and R54. Residues 125 to 127 (RSS), 238 to 239 (NA), G278, 293 to 297 (KPTSS), and R319 each bind FMN.

This sequence belongs to the chorismate synthase family. Homotetramer. FMNH2 serves as cofactor.

It carries out the reaction 5-O-(1-carboxyvinyl)-3-phosphoshikimate = chorismate + phosphate. Its pathway is metabolic intermediate biosynthesis; chorismate biosynthesis; chorismate from D-erythrose 4-phosphate and phosphoenolpyruvate: step 7/7. Catalyzes the anti-1,4-elimination of the C-3 phosphate and the C-6 proR hydrogen from 5-enolpyruvylshikimate-3-phosphate (EPSP) to yield chorismate, which is the branch point compound that serves as the starting substrate for the three terminal pathways of aromatic amino acid biosynthesis. This reaction introduces a second double bond into the aromatic ring system. In Vibrio cholerae serotype O1 (strain ATCC 39541 / Classical Ogawa 395 / O395), this protein is Chorismate synthase.